The primary structure comprises 413 residues: Peptidase T (413 aa).

His81 contributes to the Zn(2+) binding site. Asp83 is a catalytic residue. Zn(2+) is bound at residue Asp143. The active-site Proton acceptor is the Glu178. Residues Glu179, Asp201, and His383 each contribute to the Zn(2+) site.

This sequence belongs to the peptidase M20B family. It depends on Zn(2+) as a cofactor.

It localises to the cytoplasm. It catalyses the reaction Release of the N-terminal residue from a tripeptide.. Cleaves the N-terminal amino acid of tripeptides. The chain is Peptidase T from Lactococcus lactis subsp. cremoris (Streptococcus cremoris).